Reading from the N-terminus, the 398-residue chain is Serpin-Z2A (398 aa).

Positions 343–367 are RCL; the sequence is GTEAAAATIAKAVLLSASPPSDMDF.

Belongs to the serpin family.

Functionally, inhibits chymotrypsin and cathepsin G in vitro. The protein is Serpin-Z2A of Triticum aestivum (Wheat).